The following is a 206-amino-acid chain: Large ribosomal subunit protein bL25 (206 aa).

The interval 1–91 is bL25 domain; sequence MEYRLKAYYR…RPEHVDFFVL (91 aa). The CTC domain stretch occupies residues 92–206; sequence SDEPVEMYVP…IKKGKEEEEE (115 aa). The tract at residues 184-206 is disordered; that stretch reads AEEAAAEVAEPEVIKKGKEEEEE. Positions 195–206 are enriched in basic and acidic residues; it reads EVIKKGKEEEEE.

It belongs to the bacterial ribosomal protein bL25 family. CTC subfamily. In terms of assembly, part of the 50S ribosomal subunit. Contacts the 5S rRNA.

Functionally, this is one of 3 proteins that mediate the attachment of the 5S rRNA onto the large ribosomal subunit. In Thermus thermophilus, this protein is Large ribosomal subunit protein bL25 (rplY).